Here is a 396-residue protein sequence, read N- to C-terminus: Corticosteroid-binding globulin (396 aa).

The first 22 residues, 1 to 22, serve as a signal peptide directing secretion; that stretch reads MSLALYTCLLWLCTSGLWTAQA. Residues N88 and N216 are each glycosylated (N-linked (GlcNAc...) asparagine). Q246 is a cortisol binding site. Residue N252 is glycosylated (N-linked (GlcNAc...) asparagine). D278 provides a ligand contact to cortisol. Residues N319 and N352 are each glycosylated (N-linked (GlcNAc...) asparagine). W384 is a cortisol binding site.

This sequence belongs to the serpin family. As to expression, expressed by the liver; secreted in plasma.

It localises to the secreted. Its function is as follows. Major transport protein for glucocorticoids and progestins in the blood of almost all vertebrate species. This chain is Corticosteroid-binding globulin (Serpina6), found in Rattus norvegicus (Rat).